Consider the following 96-residue polypeptide: Antitoxin TacA3 (96 aa).

The segment at 61 to 96 (YLTERDTKMIMEILDNPPAPNEKLLAAAFALPDMKK) is neutralization domain.

The protein belongs to the TacA antitoxin family. As to quaternary structure, forms a complex with cognate toxin TacT3. Forms a 4:2 antitoxin:toxin complex with cognate toxin TacT3. Forms a 4:4 antitoxin:toxin complex with promoter DNA, where 2 TacT3 dimers bridge 2 TacA3 dimers. Only TacA3 contacts promoter DNA.

Its function is as follows. Antitoxin component of a type II toxin-antitoxin (TA) system. Counteracts the toxic effect of cognate toxin TacT3, but not TacT1 or TacT2. Plays a role in persister cell formation. The TacA3-TacT3 complex both represses and derepresses expression of its own operon. The hexameric 4:2 TacA3-TacT3 complex binds promoter DNA and represses its transcription; both subunits are required. The octomeric 4:4 TacA3-TacT3 complex derepresses the operon. The shift from hexameric to octomeric complex probably alters DNA-binding, leading to dissociation from the operator DNA and derepression. Does not bind the promoter of the TacA1-TacT1 operon. The polypeptide is Antitoxin TacA3 (Salmonella typhimurium (strain 14028s / SGSC 2262)).